The chain runs to 444 residues: MRNIIYFILLLFSCTGYALETINIECGRADPTPIAVNKFDADTSTNNIVGHDVVKVISNDLKLSGLFHPISSASFIEDKTGIEDKPLFAAWRQINASLLVNGEVKKLESGKLKISFILWDTLLEKQLVGEILEVPENLWRRAAHKIADKIYEKITGDAGYFDTKIVYVSESSSLPKIKRIALMDYDGANNKYLTNGTSLVLTPRFARSVDKIFYVSYATKRRALIYEKDLKTGKESIVSDFAGISFAPRFSPDGRKAVMSIAKNGSTHIYEIDLATKQLHKLTDGFGINTSPSYSPDGKKIVYNSDRNGVPQLYIMNSDGSNVKRISFGGGSYAAPSWSPRGDYIAFTKITRGEDGSKTFNIGIMKAYPQDDENSERIITSGYLVESPCWSPNGRVIMFAKGWPSRAKVPGKNKIFAIDLTGHNEREIITPEDASDPEWSMVLN.

Positions 1–18 (MRNIIYFILLLFSCTGYA) are cleaved as a signal peptide.

Belongs to the TolB family. As to quaternary structure, the Tol-Pal system is composed of five core proteins: the inner membrane proteins TolA, TolQ and TolR, the periplasmic protein TolB and the outer membrane protein Pal. They form a network linking the inner and outer membranes and the peptidoglycan layer.

It is found in the periplasm. In terms of biological role, part of the Tol-Pal system, which plays a role in outer membrane invagination during cell division and is important for maintaining outer membrane integrity. This chain is Tol-Pal system protein TolB, found in Rickettsia canadensis (strain McKiel).